A 734-amino-acid chain; its full sequence is Phosphoribosylformylglycinamidine synthase subunit PurL (734 aa).

Residue His-46 is part of the active site. Residues Tyr-49 and Lys-88 each contribute to the ATP site. Glu-90 contacts Mg(2+). Residues 91–94 (SHNH) and Arg-113 each bind substrate. The Proton acceptor role is filled by His-92. Asp-114 serves as a coordination point for Mg(2+). Residue Gln-237 coordinates substrate. Asp-265 provides a ligand contact to Mg(2+). 309–311 (ESQ) is a substrate binding site. Residues Asp-489 and Gly-526 each contribute to the ATP site. Asn-527 provides a ligand contact to Mg(2+). Ser-529 is a substrate binding site.

This sequence belongs to the FGAMS family. As to quaternary structure, monomer. Part of the FGAM synthase complex composed of 1 PurL, 1 PurQ and 2 PurS subunits.

The protein localises to the cytoplasm. It carries out the reaction N(2)-formyl-N(1)-(5-phospho-beta-D-ribosyl)glycinamide + L-glutamine + ATP + H2O = 2-formamido-N(1)-(5-O-phospho-beta-D-ribosyl)acetamidine + L-glutamate + ADP + phosphate + H(+). It participates in purine metabolism; IMP biosynthesis via de novo pathway; 5-amino-1-(5-phospho-D-ribosyl)imidazole from N(2)-formyl-N(1)-(5-phospho-D-ribosyl)glycinamide: step 1/2. In terms of biological role, part of the phosphoribosylformylglycinamidine synthase complex involved in the purines biosynthetic pathway. Catalyzes the ATP-dependent conversion of formylglycinamide ribonucleotide (FGAR) and glutamine to yield formylglycinamidine ribonucleotide (FGAM) and glutamate. The FGAM synthase complex is composed of three subunits. PurQ produces an ammonia molecule by converting glutamine to glutamate. PurL transfers the ammonia molecule to FGAR to form FGAM in an ATP-dependent manner. PurS interacts with PurQ and PurL and is thought to assist in the transfer of the ammonia molecule from PurQ to PurL. This chain is Phosphoribosylformylglycinamidine synthase subunit PurL, found in Gluconobacter oxydans (strain 621H) (Gluconobacter suboxydans).